The following is a 118-amino-acid chain: UPF0102 protein CMM_1377 (118 aa).

The protein belongs to the UPF0102 family.

This chain is UPF0102 protein CMM_1377, found in Clavibacter michiganensis subsp. michiganensis (strain NCPPB 382).